Here is a 511-residue protein sequence, read N- to C-terminus: 2-isopropylmalate synthase (511 aa).

Residues isoleucine 6–serine 269 enclose the Pyruvate carboxyltransferase domain. The Mn(2+) site is built by aspartate 15, histidine 203, histidine 205, and asparagine 239. Residues valine 394–alanine 511 form a regulatory domain region.

The protein belongs to the alpha-IPM synthase/homocitrate synthase family. LeuA type 1 subfamily. Homodimer. The cofactor is Mn(2+).

Its subcellular location is the cytoplasm. It carries out the reaction 3-methyl-2-oxobutanoate + acetyl-CoA + H2O = (2S)-2-isopropylmalate + CoA + H(+). Its pathway is amino-acid biosynthesis; L-leucine biosynthesis; L-leucine from 3-methyl-2-oxobutanoate: step 1/4. Its function is as follows. Catalyzes the condensation of the acetyl group of acetyl-CoA with 3-methyl-2-oxobutanoate (2-ketoisovalerate) to form 3-carboxy-3-hydroxy-4-methylpentanoate (2-isopropylmalate). In Campylobacter jejuni subsp. doylei (strain ATCC BAA-1458 / RM4099 / 269.97), this protein is 2-isopropylmalate synthase.